We begin with the raw amino-acid sequence, 359 residues long: MERINVNLGDRSYPISIGAELFNTPALFASAISAGRRVVVVSNETVAPLYAAQVMATIRALECEVSLLELPDGEQYKTLETFNQIMTFLLQGNYGRDVVMVALGGGVIGDVVGFAAASYQRGVDFVQVPTTLLSQVDSSVGGKTAVNHPLGKNMIGAFYQPKAVVIDNQCLKTLPAREFASGMAEVIKYGIIADYEFFVWLEQNIEKLQALDNEALCYAIGRCCQIKADVVASDEKESGVRALLNLGHTFGHAIEAEMGYGNWLHGEAVAAGTVFAAKTAHEQGLLSEEDVIRITRLHERAQLPISKPTSMDYDSFIKHMMRDKKVLSGQLRLVLPTSIGTAEVVSDVPHDVLRRVINA.

Residues 72 to 77 (DGEQYK), 106 to 110 (GVIGD), 130 to 131 (TT), Lys143, Lys152, and 170 to 173 (CLKT) each bind NAD(+). Zn(2+)-binding residues include Glu185, His248, and His265.

It belongs to the sugar phosphate cyclases superfamily. Dehydroquinate synthase family. Requires Co(2+) as cofactor. Zn(2+) serves as cofactor. The cofactor is NAD(+).

It is found in the cytoplasm. It catalyses the reaction 7-phospho-2-dehydro-3-deoxy-D-arabino-heptonate = 3-dehydroquinate + phosphate. Its pathway is metabolic intermediate biosynthesis; chorismate biosynthesis; chorismate from D-erythrose 4-phosphate and phosphoenolpyruvate: step 2/7. Functionally, catalyzes the conversion of 3-deoxy-D-arabino-heptulosonate 7-phosphate (DAHP) to dehydroquinate (DHQ). The chain is 3-dehydroquinate synthase from Photobacterium profundum (strain SS9).